The chain runs to 105 residues: Small cysteine and glycine repeat-containing protein 4 (105 aa).

The 14 X 2 AA repeats of CG stretch occupies residues 4-87 (CGCGSCGGCG…RRTCGSCGCG (84 aa)).

Belongs to the KRTAP type 28 family.

Its function is as follows. In the hair cortex, hair keratin intermediate filaments are embedded in an interfilamentous matrix, consisting of hair keratin-associated proteins (KRTAP), which are essential for the formation of a rigid and resistant hair shaft through their extensive disulfide bond cross-linking with abundant cysteine residues of hair keratins. The matrix proteins include the high-sulfur and high-glycine-tyrosine keratins. This chain is Small cysteine and glycine repeat-containing protein 4, found in Homo sapiens (Human).